The primary structure comprises 401 residues: Coenzyme A biosynthesis bifunctional protein CoaBC (401 aa).

The tract at residues 1 to 190 (MQTLAGKKIL…FQPKPLQDKS (190 aa)) is phosphopantothenoylcysteine decarboxylase. The active-site Proton donor is C159. The phosphopantothenate--cysteine ligase stretch occupies residues 191–401 (ILITAGPTRE…LKQIQTLMGH (211 aa)). CTP-binding positions include D279, K289, 307-310 (PDIV), F326, K340, and K344.

In the N-terminal section; belongs to the HFCD (homo-oligomeric flavin containing Cys decarboxylase) superfamily. It in the C-terminal section; belongs to the PPC synthetase family. It depends on Mg(2+) as a cofactor. The cofactor is FMN.

It carries out the reaction N-[(R)-4-phosphopantothenoyl]-L-cysteine + H(+) = (R)-4'-phosphopantetheine + CO2. The enzyme catalyses (R)-4'-phosphopantothenate + L-cysteine + CTP = N-[(R)-4-phosphopantothenoyl]-L-cysteine + CMP + diphosphate + H(+). It functions in the pathway cofactor biosynthesis; coenzyme A biosynthesis; CoA from (R)-pantothenate: step 2/5. The protein operates within cofactor biosynthesis; coenzyme A biosynthesis; CoA from (R)-pantothenate: step 3/5. Its function is as follows. Catalyzes two sequential steps in the biosynthesis of coenzyme A. In the first step cysteine is conjugated to 4'-phosphopantothenate to form 4-phosphopantothenoylcysteine. In the second step the latter compound is decarboxylated to form 4'-phosphopantotheine. This Vibrio vulnificus (strain YJ016) protein is Coenzyme A biosynthesis bifunctional protein CoaBC.